Reading from the N-terminus, the 302-residue chain is Flavin-dependent thymidylate synthase (302 aa).

One can recognise a ThyX domain in the interval 43–257 (GFVRVIDYMG…PFAYKAFEDY (215 aa)). FAD-binding positions include threonine 89, 112-114 (RHR), and glutamate 120. Residues 109-112 (QWIR), 120-124 (EYSAR), and arginine 196 contribute to the dUMP site. The ThyX motif motif lies at 112-122 (RHRTANVNEYS). FAD contacts are provided by residues 212–214 (DLH) and histidine 218. Arginine 223 is a binding site for dUMP. Residue arginine 223 is the Involved in ionization of N3 of dUMP, leading to its activation of the active site.

The protein belongs to the thymidylate synthase ThyX family. Homotetramer. FAD serves as cofactor.

The catalysed reaction is dUMP + (6R)-5,10-methylene-5,6,7,8-tetrahydrofolate + NADPH + H(+) = dTMP + (6S)-5,6,7,8-tetrahydrofolate + NADP(+). The protein operates within pyrimidine metabolism; dTTP biosynthesis. Catalyzes the reductive methylation of 2'-deoxyuridine-5'-monophosphate (dUMP) to 2'-deoxythymidine-5'-monophosphate (dTMP) while utilizing 5,10-methylenetetrahydrofolate (mTHF) as the methyl donor, and NADPH and FADH(2) as the reductant. The protein is Flavin-dependent thymidylate synthase of Ruegeria pomeroyi (strain ATCC 700808 / DSM 15171 / DSS-3) (Silicibacter pomeroyi).